Consider the following 273-residue polypeptide: HMP-PP phosphatase (273 aa).

The Nucleophile role is filled by Asp-8. Mg(2+) contacts are provided by Asp-8, Asp-10, and Asp-212.

The protein belongs to the HAD-like hydrolase superfamily. Cof family. Mg(2+) serves as cofactor.

It carries out the reaction 4-amino-2-methyl-5-(diphosphooxymethyl)pyrimidine + H2O = 4-amino-2-methyl-5-(phosphooxymethyl)pyrimidine + phosphate + H(+). In terms of biological role, catalyzes the hydrolysis of 4-amino-2-methyl-5-hydroxymethylpyrimidine pyrophosphate (HMP-PP) to 4-amino-2-methyl-5-hydroxymethylpyrimidine phosphate (HMP-P). In Yersinia enterocolitica serotype O:8 / biotype 1B (strain NCTC 13174 / 8081), this protein is HMP-PP phosphatase.